A 339-amino-acid polypeptide reads, in one-letter code: Protein-glutamate methylesterase/protein-glutamine glutaminase 2 (339 aa).

In terms of domain architecture, Response regulatory spans 2–119; that stretch reads NIGIVNDLPL…GLSTDASPQA (118 aa). Asp-53 is modified (4-aspartylphosphate). One can recognise a CheB-type methylesterase domain in the interval 141-336; that stretch reads PGPAPERGQP…PQLISRITRP (196 aa). Residues Ser-158, His-185, and Asp-278 contribute to the active site.

This sequence belongs to the CheB family. Post-translationally, phosphorylated by CheA. Phosphorylation of the N-terminal regulatory domain activates the methylesterase activity.

The protein resides in the cytoplasm. The catalysed reaction is [protein]-L-glutamate 5-O-methyl ester + H2O = L-glutamyl-[protein] + methanol + H(+). It carries out the reaction L-glutaminyl-[protein] + H2O = L-glutamyl-[protein] + NH4(+). Involved in chemotaxis. Part of a chemotaxis signal transduction system that modulates chemotaxis in response to various stimuli. Catalyzes the demethylation of specific methylglutamate residues introduced into the chemoreceptors (methyl-accepting chemotaxis proteins or MCP) by CheR. Also mediates the irreversible deamidation of specific glutamine residues to glutamic acid. The chain is Protein-glutamate methylesterase/protein-glutamine glutaminase 2 from Burkholderia lata (strain ATCC 17760 / DSM 23089 / LMG 22485 / NCIMB 9086 / R18194 / 383).